We begin with the raw amino-acid sequence, 316 residues long: Probable cell division protein WhiA (316 aa).

A DNA-binding region (H-T-H motif) is located at residues 280-313; that stretch reads SLKELGEMLEPPVGKSGVNHRLRKIEKIAEELRT.

The protein belongs to the WhiA family.

Involved in cell division and chromosome segregation. This is Probable cell division protein WhiA from Clostridium perfringens (strain 13 / Type A).